We begin with the raw amino-acid sequence, 318 residues long: Sucrose operon repressor (318 aa).

Residues 1–56 (MIKLEDVANKAGVSVTTVSRVINRKGYLSDATISKVEKAMQDLHYIPNAAARSLQG) form the HTH lacI-type domain. A DNA-binding region (H-T-H motif) is located at residues 4 to 23 (LEDVANKAGVSVTTVSRVIN).

Its function is as follows. This protein may control the expression of the genes that are involved in the transport and catabolism of sucrose. The protein is Sucrose operon repressor (sacR) of Lactococcus lactis subsp. lactis (Streptococcus lactis).